The following is a 424-amino-acid chain: GTPase Obg (424 aa).

One can recognise an Obg domain in the interval M1–L159. The OBG-type G domain maps to A160–S330. GTP contacts are provided by residues G166 to S173, F191 to T195, D212 to G215, N282 to D285, and S311 to L313. Residues S173 and T193 each contribute to the Mg(2+) site. The OCT domain maps to N347–E424.

The protein belongs to the TRAFAC class OBG-HflX-like GTPase superfamily. OBG GTPase family. Monomer. Requires Mg(2+) as cofactor.

It localises to the cytoplasm. Its function is as follows. An essential GTPase which binds GTP, GDP and possibly (p)ppGpp with moderate affinity, with high nucleotide exchange rates and a fairly low GTP hydrolysis rate. Plays a role in control of the cell cycle, stress response, ribosome biogenesis and in those bacteria that undergo differentiation, in morphogenesis control. The polypeptide is GTPase Obg (Caldanaerobacter subterraneus subsp. tengcongensis (strain DSM 15242 / JCM 11007 / NBRC 100824 / MB4) (Thermoanaerobacter tengcongensis)).